We begin with the raw amino-acid sequence, 520 residues long: Probable kinase 098L (520 aa).

The Protein kinase domain maps to 82 to 393; that stretch reads LTSVQSFGSK…NSPLLKKGFV (312 aa). Residues 88-96 and Lys-111 contribute to the ATP site; that span reads FGSKSKQGI. Asp-205 (proton acceptor) is an active-site residue. Positions 416–442 form a coiled coil; it reads QTAQLIETDKEILDNLIDDLELKIVRK.

Belongs to the protein kinase superfamily.

Probable kinase. The sequence is that of Probable kinase 098L from Aedes vexans (Inland floodwater mosquito).